Consider the following 287-residue polypeptide: MNSSTRIFALLGRAVDYSYSPLIHNTAFQALGLPYHYTIFNIAEAALVGDALRGARALGLGGFSVTIPYKQTVVPFLDELSEEATTIQAVNCIVNKNGKLIGYNTDILGFASPLFAYREALHGATIALFGSGGAALAAIEAFQRYFTPKQVLLFARDSQKAKSQLRSSLALERYTNLAIVPLSDYERVRECRLVINATPLGTKGRADGSAIIPLESNLLHSEHIVYDMVYNPTITPLLQAAQAVGASTIFGIEMLIGQAEQAFTLWTGEKMPTELVRQTVMAKLQEL.

Shikimate is bound by residues 18–20 and T66; that span reads SYS. Catalysis depends on K70, which acts as the Proton acceptor. E82 contributes to the NADP(+) binding site. Residues N91 and D106 each coordinate shikimate. Residues 130-134 and M228 each bind NADP(+); that span reads GSGGA. Position 230 (Y230) interacts with shikimate. NADP(+) is bound at residue G251.

It belongs to the shikimate dehydrogenase family. Homodimer.

It catalyses the reaction shikimate + NADP(+) = 3-dehydroshikimate + NADPH + H(+). It functions in the pathway metabolic intermediate biosynthesis; chorismate biosynthesis; chorismate from D-erythrose 4-phosphate and phosphoenolpyruvate: step 4/7. Involved in the biosynthesis of the chorismate, which leads to the biosynthesis of aromatic amino acids. Catalyzes the reversible NADPH linked reduction of 3-dehydroshikimate (DHSA) to yield shikimate (SA). This is Shikimate dehydrogenase (NADP(+)) from Chlorobium chlorochromatii (strain CaD3).